A 630-amino-acid chain; its full sequence is Internalin B (630 aa).

A signal peptide spans 1–30; the sequence is MKEKHNPRRKYCLISGLAIIFSLWIIIGNG. In terms of domain architecture, LRRNT spans 31–76; sequence AKVQAETITVPTPIKQIFSDDAFAETIKDNLKKKSVTDAVTQNELN. LRR repeat units lie at residues 75–97, 98–121, 123–141, 142–163, 164–187, 189–207, and 208–231; these read LNSIDQIIANNSDIKSVQGIQYL, PNVTKLFLNGNKLTDIKPLANLKN, GWLFLDENKVKDLSSLKDL, KKLKSLSLEHNGISDINGLVHL, PQLESLYLGNNKITDITVLSRLTK, DTLSLEDNQISDIVPLAGL, and TKLQNLYLSKNHISDLRALAGLKN. Positions 241-319 are ig-like region; sequence ECLNKPINHQ…RFHGRVTQPL (79 aa). The 90-residue stretch at 241–330 folds into the LRRCT domain; the sequence is ECLNKPINHQ…EVYTVSYDVD (90 aa). Residues 320-392 form a b repeat region region; sequence KEVYTVSYDV…TLYAVFKAET (73 aa). GW domains follow at residues 393-467, 472-550, and 553-630; these read TEKA…LDRY, YDKG…TFYK, and MEKP…RAQK. A GW repeat region, necessary and sufficient for cell surface attachment, interacts with host C1QBP and with heparin region spans residues 399-630; the sequence is LTRYVKYIRG…TKAANLRAQK (232 aa).

It belongs to the internalin family. Interacts via its LRR repeats plus the Ig-like region with the extracellular portion (residues 25-741) of its receptor MET; MET can bind HGF, its endogenous ligand, and InlB simultaneously. Probably forms a dimer upon interaction with host MET, which subsequently allows dimerization of the host MET and subsequent host signaling; dimerization probably occurs via the convex surface of InlB. Prevention of dimerization does not block interaction with MET but prevents downstream action.

It is found in the secreted. The protein localises to the cytoplasm. Its subcellular location is the cell membrane. In terms of biological role, mediates the entry of L.monocytogenes into normally non-phagocytic mammalian host cells. Its host receptor is hepatocyte growth factor receptor (HGF receptor, a tyrosine kinase, MET) which is tyrosine-phosphorylated in response to InlB. Downstream targets MAPK1/MAPK3 (Erk1/2) and AKT are phosphorylated in response to InlB, which also causes cell colony scattering. Complement component 1 Q subcomponent-binding protein (gC1q-R, C1QBP) has been suggested to also act an InlB receptor, but this is less certain. Stimulation of Tyr-phosphorylation of MET by InlB is potentiated by the InlB GW domains and glycosaminoglycans such as heparin. The chain is Internalin B (inlB) from Listeria monocytogenes serovar 1/2a (strain ATCC BAA-679 / EGD-e).